Reading from the N-terminus, the 149-residue chain is UPF0178 protein SERP0336 (149 aa).

It belongs to the UPF0178 family.

In Staphylococcus epidermidis (strain ATCC 35984 / DSM 28319 / BCRC 17069 / CCUG 31568 / BM 3577 / RP62A), this protein is UPF0178 protein SERP0336.